Consider the following 523-residue polypeptide: SWI/SNF and RSC complexes subunit arp9 (523 aa).

Positions isoleucine 56–threonine 72 are enriched in basic and acidic residues. 2 disordered regions span residues isoleucine 56 to glycine 92 and glutamine 319 to valine 339. Residues glutamine 79 to glycine 92 show a composition bias toward polar residues. Residues glutamine 319–asparagine 336 are compositionally biased toward basic and acidic residues.

It belongs to the actin family. As to quaternary structure, component of the RSC complex composed of at least arp9, arp42, rsc1, rsc4, rsc7, rsc9, rsc58, sfh1, snf21, ssr1, ssr2, ssr3 and ssr4. The complex interacts with histone and histone variant components of centromeric chromatin. Component of the SWI/SNF global transcription activator complex composed of at least arp9, arp42, snf5, snf22, snf30, sbf59, sol1, ssr1, ssr2, ssr3, ssr4 and tfg3.

It is found in the cytoplasm. The protein localises to the nucleus. Component of the chromatin structure remodeling complex (RSC), which is involved in transcription regulation and nucleosome positioning. Controls particularly membrane and organelle development genes. Part of the SWI/SNF complex, an ATP-dependent chromatin remodeling complex, required for the positive and negative regulation of gene expression of a large number of genes. It changes chromatin structure by altering DNA-histone contacts within a nucleosome, leading eventually to a change in nucleosome position, thus facilitating or repressing binding of gene-specific transcription factors. In Schizosaccharomyces pombe (strain 972 / ATCC 24843) (Fission yeast), this protein is SWI/SNF and RSC complexes subunit arp9 (arp9).